The sequence spans 673 residues: DNA ligase (673 aa).

NAD(+)-binding positions include 38 to 42, 87 to 88, and glutamate 119; these read DSVYD and SL. Lysine 121 serves as the catalytic N6-AMP-lysine intermediate. NAD(+)-binding residues include arginine 142, glutamate 179, lysine 296, and lysine 320. 4 residues coordinate Zn(2+): cysteine 414, cysteine 417, cysteine 432, and cysteine 438. In terms of domain architecture, BRCT spans 595–673; sequence VVKSEIAGKT…EEAFLKLLKS (79 aa).

The protein belongs to the NAD-dependent DNA ligase family. LigA subfamily. Mg(2+) is required as a cofactor. It depends on Mn(2+) as a cofactor.

The enzyme catalyses NAD(+) + (deoxyribonucleotide)n-3'-hydroxyl + 5'-phospho-(deoxyribonucleotide)m = (deoxyribonucleotide)n+m + AMP + beta-nicotinamide D-nucleotide.. DNA ligase that catalyzes the formation of phosphodiester linkages between 5'-phosphoryl and 3'-hydroxyl groups in double-stranded DNA using NAD as a coenzyme and as the energy source for the reaction. It is essential for DNA replication and repair of damaged DNA. The polypeptide is DNA ligase (Coxiella burnetii (strain RSA 493 / Nine Mile phase I)).